A 611-amino-acid polypeptide reads, in one-letter code: Dihydroxy-acid dehydratase (611 aa).

D81 contributes to the Mg(2+) binding site. C122 is a binding site for [2Fe-2S] cluster. The Mg(2+) site is built by D123 and K124. An N6-carboxylysine modification is found at K124. C195 is a binding site for [2Fe-2S] cluster. E491 lines the Mg(2+) pocket. Catalysis depends on S517, which acts as the Proton acceptor.

The protein belongs to the IlvD/Edd family. In terms of assembly, homodimer. It depends on [2Fe-2S] cluster as a cofactor. Mg(2+) is required as a cofactor.

It carries out the reaction (2R)-2,3-dihydroxy-3-methylbutanoate = 3-methyl-2-oxobutanoate + H2O. The catalysed reaction is (2R,3R)-2,3-dihydroxy-3-methylpentanoate = (S)-3-methyl-2-oxopentanoate + H2O. It participates in amino-acid biosynthesis; L-isoleucine biosynthesis; L-isoleucine from 2-oxobutanoate: step 3/4. It functions in the pathway amino-acid biosynthesis; L-valine biosynthesis; L-valine from pyruvate: step 3/4. Its function is as follows. Functions in the biosynthesis of branched-chain amino acids. Catalyzes the dehydration of (2R,3R)-2,3-dihydroxy-3-methylpentanoate (2,3-dihydroxy-3-methylvalerate) into 2-oxo-3-methylpentanoate (2-oxo-3-methylvalerate) and of (2R)-2,3-dihydroxy-3-methylbutanoate (2,3-dihydroxyisovalerate) into 2-oxo-3-methylbutanoate (2-oxoisovalerate), the penultimate precursor to L-isoleucine and L-valine, respectively. This is Dihydroxy-acid dehydratase from Histophilus somni (strain 2336) (Haemophilus somnus).